Reading from the N-terminus, the 211-residue chain is Adenylate kinase (211 aa).

Residue 10-15 (GSGKGT) participates in ATP binding. The tract at residues 30–59 (STGDMLRAEVSKKSPLGLKAEEYMKQGLLV) is NMP. Residues Thr-31, Arg-36, 57–59 (LLV), 84–87 (GFPR), and Gln-91 each bind AMP. Residues 125-162 (GRRVCPKCGATYNIYYQKPKNDTLCDNDATPLIQRDDD) form an LID region. Arg-126 contributes to the ATP binding site. Residues Cys-129 and Cys-132 each contribute to the Zn(2+) site. 135–136 (TY) is an ATP binding site. The Zn(2+) site is built by Cys-149 and Asp-152. Residues Arg-159 and Arg-170 each contribute to the AMP site. Gly-198 contributes to the ATP binding site.

Belongs to the adenylate kinase family. Monomer.

It localises to the cytoplasm. The catalysed reaction is AMP + ATP = 2 ADP. It functions in the pathway purine metabolism; AMP biosynthesis via salvage pathway; AMP from ADP: step 1/1. Its function is as follows. Catalyzes the reversible transfer of the terminal phosphate group between ATP and AMP. Plays an important role in cellular energy homeostasis and in adenine nucleotide metabolism. This Hydrogenobaculum sp. (strain Y04AAS1) protein is Adenylate kinase.